Reading from the N-terminus, the 428-residue chain is MPGIVLIGAQWGDEGKGKATDLIGTKVDYVARFNGGNNAGHSVVVGDESYALHLLPSGIINPNLTPVIGNGVVVDPEVLFEEIDGLESRGIDCSHLKVSEAAHIIAPYHRTLDKVTERFLGKHKIGTTGRGIGPAYADKINRVGIRVHDLFNADHLHDKVEASLHQKNQMLVKLYNRRPIDVDQTTEELLKLGERLKPYVANTGLILNKALDEGKTVLFEGAQATMLDVDHGTYPFVTSSNPTAGGACTGTGVGPTKITRVIGVSKAYVTRVGEGPFPTELLDESGEWLRQQGHEFGVTTGRPRRCGWFDAVVNRYASQVNGLTDIVLTKLDVLTGLKEIPICVAYDVDGERHDDMPTDQAAFAAAKPIYETMPGWDEDISDCHSFDELPATCQAYVKRLEELSGCRISAIGTGPQRDHVIQINSLVD.

Residues 12–18 and 40–42 contribute to the GTP site; these read GDEGKGK and GHS. The active-site Proton acceptor is aspartate 13. Residues aspartate 13 and glycine 40 each coordinate Mg(2+). IMP contacts are provided by residues 13-16, 38-41, threonine 128, arginine 142, glutamine 223, threonine 238, and arginine 302; these read DEGK and NAGH. Catalysis depends on histidine 41, which acts as the Proton donor. 298–304 provides a ligand contact to substrate; the sequence is VTTGRPR. GTP-binding positions include arginine 304, 330–332, and 412–414; these read KLD and GTG.

This sequence belongs to the adenylosuccinate synthetase family. In terms of assembly, homodimer. The cofactor is Mg(2+).

It is found in the cytoplasm. The enzyme catalyses IMP + L-aspartate + GTP = N(6)-(1,2-dicarboxyethyl)-AMP + GDP + phosphate + 2 H(+). It functions in the pathway purine metabolism; AMP biosynthesis via de novo pathway; AMP from IMP: step 1/2. Functionally, plays an important role in the de novo pathway of purine nucleotide biosynthesis. Catalyzes the first committed step in the biosynthesis of AMP from IMP. The protein is Adenylosuccinate synthetase of Bifidobacterium longum (strain DJO10A).